Reading from the N-terminus, the 388-residue chain is L-arabinitol 4-dehydrogenase (388 aa).

Positions 55, 80, 81, 110, 113, 116, 124, and 165 each coordinate Zn(2+). Residues 192–193 (PI), Asp-213, Arg-218, Ile-293, and 317–319 (QYR) contribute to the NAD(+) site.

It belongs to the zinc-containing alcohol dehydrogenase family. As to quaternary structure, homotetramer. Zn(2+) serves as cofactor.

It carries out the reaction L-arabinitol + NAD(+) = L-xylulose + NADH + H(+). It participates in carbohydrate degradation; L-arabinose degradation via L-arabinitol; D-xylulose 5-phosphate from L-arabinose (fungal route): step 2/5. In terms of biological role, catalyzes the NAD-dependent oxidation of L-arabinitol to L-xylulose in the fungal L-arabinose catabolic pathway. L-arabinose catabolism is important for using plant material as a carbon source. NADP cannot act as a cosubstrate. The protein is L-arabinitol 4-dehydrogenase (lad) of Talaromyces emersonii (Thermophilic fungus).